A 308-amino-acid chain; its full sequence is Methionyl-tRNA formyltransferase (308 aa).

(6S)-5,6,7,8-tetrahydrofolate is bound at residue Ser-109 to Pro-112.

Belongs to the Fmt family.

The enzyme catalyses L-methionyl-tRNA(fMet) + (6R)-10-formyltetrahydrofolate = N-formyl-L-methionyl-tRNA(fMet) + (6S)-5,6,7,8-tetrahydrofolate + H(+). Its function is as follows. Attaches a formyl group to the free amino group of methionyl-tRNA(fMet). The formyl group appears to play a dual role in the initiator identity of N-formylmethionyl-tRNA by promoting its recognition by IF2 and preventing the misappropriation of this tRNA by the elongation apparatus. This is Methionyl-tRNA formyltransferase from Clostridium beijerinckii (strain ATCC 51743 / NCIMB 8052) (Clostridium acetobutylicum).